A 441-amino-acid polypeptide reads, in one-letter code: MSTLGQGDFELAVRQQPKYACVAIERKPIDPPPIVQLMVNPRKDPGRTFLQNPYLILTARLIRKGDEDQDEQTGPKESDLTGTLVSSLYSLKDTDNSQGGFFVFGDLSVRRVGTYRLAFILYELRLAEKECWLLSRTVSDPFVVYATKTFPGLAESTFLTRSFSDQGVRLRLRKDSRTVSTKKRTISQADQIRASQGIHGYLPHDANHDLSPNGHSPHHLRRLSSLHDQAQLDRSRSYYSESPQMRPGEYTSSSYGYAPYDDQKPHKRARMDGASPDSPHPSSAGGGGGGYETDTTAYHSYAHHAHHSGPRTVPDALGSIYPLTTSGYAVAPQPALTGLPMPSPYASMPRLDTTHLPPHSPAGAPGSASSAFSPGTIGSSSRRSPPGTAGGYPSYAGHAHAGQAMFTSQPTSLPYHPAVAHGHPGAGGLGIAVGLDLDERH.

One can recognise a Velvet domain in the interval 1-173 (MSTLGQGDFE…SDQGVRLRLR (173 aa)). Disordered regions lie at residues 200-220 (GYLP…PHHL), 234-295 (RSRS…ETDT), and 341-396 (MPSP…PSYA). Low complexity-rich tracts occupy residues 272–283 (DGASPDSPHPSS) and 361–375 (PAGA…FSPG).

This sequence belongs to the velvet family. VelB subfamily. Component of the heterotrimeric velvet complex composed of laeA, veA and velB; VeA acting as a bridging protein between laeA and velB.

The protein resides in the nucleus. It is found in the cytoplasm. Its function is as follows. Component of the velvet transcription factor complex that controls sexual/asexual developmental ratio in response to light, promoting sexual development in the darkness while stimulating asexual sporulation under illumination. The velvet complex acts as a global regulator for secondary metabolite gene expression and is required for the production of chaetoglobosin A. The chain is Velvet complex subunit B from Chaetomium globosum (strain ATCC 6205 / CBS 148.51 / DSM 1962 / NBRC 6347 / NRRL 1970) (Soil fungus).